Reading from the N-terminus, the 144-residue chain is Protein D (144 aa).

This chain is Protein D (D), found in Escherichia coli.